Here is an 83-residue protein sequence, read N- to C-terminus: Small ribosomal subunit protein uS19m (83 aa).

The protein belongs to the universal ribosomal protein uS19 family.

It localises to the mitochondrion. This Tetraselmis subcordiformis (Marine green alga) protein is Small ribosomal subunit protein uS19m (RPS19).